The following is a 204-amino-acid chain: UPF0637 protein SAB0972c (204 aa).

It belongs to the UPF0637 family.

The protein is UPF0637 protein SAB0972c of Staphylococcus aureus (strain bovine RF122 / ET3-1).